We begin with the raw amino-acid sequence, 365 residues long: MDESLEHQTQTHDQESEIVTEGSAVVHSEPSQEGNVPPKVDSEAEVLDEKVSKQIIKEGHGSKPSKYSTCFLHYRAWTKNSQHKFEDTWHEQQPIELVLGKEKKELAGLAIGVASMKSGERALVHVGWELAYGKEGNFSFPNVPPMADLLYEVEVIGFDETKEGKARSDMTVEERIGAADRRKMDGNSLFKEEKLEEAMQQYEMAIAYMGDDFMFQLYGKYQDMALAVKNPCHLNIAACLIKLKRYDEAIGHCNIVLTEEEKNPKALFRRGKAKAELGQMDSARDDFRKAQKYAPDDKAIRRELRALAEQEKALYQKQKEMYKGIFKGKDEGGAKSKSLFWLIVLWQWFVSLFSRIFRRHRVKAD.

The span at 1–15 (MDESLEHQTQTHDQE) shows a compositional bias: basic and acidic residues. Positions 1–44 (MDESLEHQTQTHDQESEIVTEGSAVVHSEPSQEGNVPPKVDSEA) are disordered. An interaction with MDR1/PGP1 region spans residues 1-163 (MDESLEHQTQ…EVIGFDETKE (163 aa)). Positions 67–159 (YSTCFLHYRA…LYEVEVIGFD (93 aa)) constitute a PPIase FKBP-type domain. Positions 163–337 (EGKARSDMTV…GKDEGGAKSK (175 aa)) are interaction with MRP1. 3 TPR repeats span residues 179 to 212 (ADRR…MGDD), 230 to 263 (NPCH…EEKN), and 264 to 297 (PKAL…APDD). Residues 310–326 (QEKALYQKQKEMYKGIF) are calmodulin-binding. A helical; Anchor for type IV membrane protein membrane pass occupies residues 338-357 (SLFWLIVLWQWFVSLFSRIF).

The protein belongs to the FKBP-type PPIase family. Interacts with calmodulin (CaM), MRP1, MRP2, MDR1/PGP1, MDR11/PGP19 and SHD/HSP90. Interacts with 1-naphthylphthalamic acid (NPA).

Its subcellular location is the cell membrane. The protein resides in the vacuole membrane. It is found in the endoplasmic reticulum. It catalyses the reaction [protein]-peptidylproline (omega=180) = [protein]-peptidylproline (omega=0). Its function is as follows. PPIases accelerate the folding of proteins. It catalyzes the cis-trans isomerization of proline imidic peptide bonds in oligopeptides. Modulates the uptake of MRP substrates into the vacuole; reduces metolachlor-GS (MOC-GS) and enhances 17-beta-estradiol 17-(beta-D-glucuronide) (E(2)17betaG) uptake. Regulates cell elongation and orientation. Functions as a positive regulator of PGP1-mediated auxin transport. Confers drug modulation of PGP1 efflux activity as interaction with NPA or flavonol quercetin prevents its physical and functional interaction with PGP1. Required for the proper localization of auxin-related ABCB transporters. Plays a role in brassinosteroid (BR) signaling pathway. Required for seed development by promoting stamen elongation and, to a lesser extent, anther dehiscence and pollen maturation, probably as a chaperone helping ABCB1 and ABCB19 auxin transporters localization and activation. Involved in auxin signaling in nectaries to promote starch accumulation to attract visiting pollinators. The chain is Peptidyl-prolyl cis-trans isomerase FKBP42 from Arabidopsis thaliana (Mouse-ear cress).